The following is a 222-amino-acid chain: Cytidylate kinase (222 aa).

11 to 19 lines the ATP pocket; sequence GPTASGKGT.

It belongs to the cytidylate kinase family. Type 1 subfamily.

Its subcellular location is the cytoplasm. It catalyses the reaction CMP + ATP = CDP + ADP. The catalysed reaction is dCMP + ATP = dCDP + ADP. This chain is Cytidylate kinase, found in Cupriavidus necator (strain ATCC 17699 / DSM 428 / KCTC 22496 / NCIMB 10442 / H16 / Stanier 337) (Ralstonia eutropha).